The chain runs to 139 residues: ATP synthase epsilon chain (139 aa).

The tract at residues Glu89–Arg110 is disordered.

This sequence belongs to the ATPase epsilon chain family. In terms of assembly, F-type ATPases have 2 components, CF(1) - the catalytic core - and CF(0) - the membrane proton channel. CF(1) has five subunits: alpha(3), beta(3), gamma(1), delta(1), epsilon(1). CF(0) has three main subunits: a, b and c.

The protein resides in the cell membrane. Its function is as follows. Produces ATP from ADP in the presence of a proton gradient across the membrane. In Chloroflexus aurantiacus (strain ATCC 29366 / DSM 635 / J-10-fl), this protein is ATP synthase epsilon chain.